Consider the following 639-residue polypeptide: UvrABC system protein C (639 aa).

Over residues 1-16 (MTDLPVDEPDRDDGAD) the composition is skewed to acidic residues. The disordered stretch occupies residues 1-28 (MTDLPVDEPDRDDGADQPDAGADPATPR). Residues 17 to 27 (QPDAGADPATP) show a composition bias toward low complexity. The 79-residue stretch at 42–120 (SSPGVYRMID…IKKLKPRYNI (79 aa)) folds into the GIY-YIG domain. Positions 230-265 (KALQHDLAKRMDEAAQALDYEQAAIFRDRIKALTNV) constitute a UVR domain.

This sequence belongs to the UvrC family. Interacts with UvrB in an incision complex.

The protein resides in the cytoplasm. The UvrABC repair system catalyzes the recognition and processing of DNA lesions. UvrC both incises the 5' and 3' sides of the lesion. The N-terminal half is responsible for the 3' incision and the C-terminal half is responsible for the 5' incision. This is UvrABC system protein C from Rhodospirillum rubrum (strain ATCC 11170 / ATH 1.1.1 / DSM 467 / LMG 4362 / NCIMB 8255 / S1).